Reading from the N-terminus, the 349-residue chain is Core protein VP7 (349 aa).

N-linked (GlcNAc...) asparagine; by host glycosylation occurs at Asn-45.

This sequence belongs to the orbivirus VP7 family. In terms of assembly, homotrimer.

The protein localises to the virion. In terms of biological role, major structural core protein; binds to structural protein VP3. Constitutes the surface of the AHSV core. This African horse sickness virus 6 (AHSV-6) protein is Core protein VP7 (Segment-7).